Reading from the N-terminus, the 181-residue chain is Adenine phosphoribosyltransferase (181 aa).

It belongs to the purine/pyrimidine phosphoribosyltransferase family. Homodimer.

The protein resides in the cytoplasm. The catalysed reaction is AMP + diphosphate = 5-phospho-alpha-D-ribose 1-diphosphate + adenine. Its pathway is purine metabolism; AMP biosynthesis via salvage pathway; AMP from adenine: step 1/1. In terms of biological role, catalyzes a salvage reaction resulting in the formation of AMP, that is energically less costly than de novo synthesis. The sequence is that of Adenine phosphoribosyltransferase from Acidobacterium capsulatum (strain ATCC 51196 / DSM 11244 / BCRC 80197 / JCM 7670 / NBRC 15755 / NCIMB 13165 / 161).